Here is a 418-residue protein sequence, read N- to C-terminus: Thyroid hormone receptor alpha-B (418 aa).

A disordered region spans residues Met1–Asp40. The tract at residues Met1 to Pro60 is modulating. 2 consecutive NR C4-type zinc fingers follow at residues Cys61 to Cys81 and Cys99 to Cys123. The nuclear receptor DNA-binding region spans Cys61–Met128. The NR LBD domain occupies Glu171 to Asp415.

This sequence belongs to the nuclear hormone receptor family. NR1 subfamily. Binds to thyroid hormone receptor element (TRE) weakly as homodimers and monomers, but binds TRE with much higher affinity as heterodimers with retinoid X receptors. Can bind DNA as a heterodimer with either rxra or rxrg.

Its subcellular location is the nucleus. High affinity receptor for triiodothyronine (T3). The chain is Thyroid hormone receptor alpha-B (thra-b) from Xenopus laevis (African clawed frog).